The primary structure comprises 417 residues: Tyrosine--tRNA ligase (417 aa).

Tyr40 provides a ligand contact to L-tyrosine. Residues 45–54 (ATAASLHVGH) carry the 'HIGH' region motif. Residues Tyr177 and Gln181 each contribute to the L-tyrosine site. The 'KMSKS' region motif lies at 237–241 (KMGKS). Residue Lys240 coordinates ATP. The S4 RNA-binding domain maps to 351-414 (ISVVQLITRS…AGRKRHALIK (64 aa)).

It belongs to the class-I aminoacyl-tRNA synthetase family. TyrS type 1 subfamily. In terms of assembly, homodimer.

It localises to the cytoplasm. It catalyses the reaction tRNA(Tyr) + L-tyrosine + ATP = L-tyrosyl-tRNA(Tyr) + AMP + diphosphate + H(+). Catalyzes the attachment of tyrosine to tRNA(Tyr) in a two-step reaction: tyrosine is first activated by ATP to form Tyr-AMP and then transferred to the acceptor end of tRNA(Tyr). This is Tyrosine--tRNA ligase from Dinoroseobacter shibae (strain DSM 16493 / NCIMB 14021 / DFL 12).